Reading from the N-terminus, the 341-residue chain is N-acetyl-gamma-glutamyl-phosphate reductase (341 aa).

The active site involves cysteine 146.

It belongs to the NAGSA dehydrogenase family. Type 1 subfamily.

The protein localises to the cytoplasm. The catalysed reaction is N-acetyl-L-glutamate 5-semialdehyde + phosphate + NADP(+) = N-acetyl-L-glutamyl 5-phosphate + NADPH + H(+). Its pathway is amino-acid biosynthesis; L-arginine biosynthesis; N(2)-acetyl-L-ornithine from L-glutamate: step 3/4. Its function is as follows. Catalyzes the NADPH-dependent reduction of N-acetyl-5-glutamyl phosphate to yield N-acetyl-L-glutamate 5-semialdehyde. This Limosilactobacillus fermentum (strain NBRC 3956 / LMG 18251) (Lactobacillus fermentum) protein is N-acetyl-gamma-glutamyl-phosphate reductase.